The chain runs to 360 residues: MTKKIQVGLIFGGNSSEYEVSIVSGHNIYKAIDKDKFDVHPIWITNEGYFASEEESFKVLEDPSYQVENPHKVNNISNIIELKNLPEIDVFFPIVHGNLGEDGVLQGLFRLMNKPFVGDDVLAAAATMDKEFTKILAQRVGVPVADWISIKRFEYDDKNNDKLNYEKVAEKLGHDMFVKPSNQGSSVGVNHVTNAEEYAAALEEAFKYDDKVLVEETVPGTEVETAVLGNDKPIVAGVGQITNAKGSFYTYENKYDDNSTSKLQIPADLPQDIVDTVRENARKVYEITECSGMARIDSMLTPDGKVVLTEVNALPGFTNISMYPKLFEEAGIPYTELITRLIQAGMDRFDHKKTLLHKHD.

The ATP-grasp domain occupies K134–Q343. A169–E224 serves as a coordination point for ATP. The Mg(2+) site is built by D297, E310, and N312.

It belongs to the D-alanine--D-alanine ligase family. The cofactor is Mg(2+). It depends on Mn(2+) as a cofactor.

The protein resides in the cytoplasm. It catalyses the reaction 2 D-alanine + ATP = D-alanyl-D-alanine + ADP + phosphate + H(+). Its pathway is cell wall biogenesis; peptidoglycan biosynthesis. Cell wall formation. This is D-alanine--D-alanine ligase from Lactobacillus acidophilus (strain ATCC 700396 / NCK56 / N2 / NCFM).